The sequence spans 274 residues: Kit ligand (274 aa).

The N-terminal stretch at 1-25 (MKKTQTWIITCIYLQLLLFNPLVHS) is a signal peptide. Q26 is subject to Pyrrolidone carboxylic acid. Topologically, residues 26–215 (QGICRNRVTD…SNSIEDSSLQ (190 aa)) are extracellular. Intrachain disulfides connect C29-C114 and C68-C164. N-linked (GlcNAc...) asparagine glycans are attached at residues N90, N97, N145, and N196. Residues 216–238 (WAAVALPAFFSLVIGFAFGALYW) traverse the membrane as a helical segment. Topologically, residues 239-274 (KKKQPNLTRTVENRQINEEDNEISMLQEKEREFQEV) are cytoplasmic.

Belongs to the SCF family. Homodimer, non-covalently linked. Post-translationally, a soluble form is produced by proteolytic processing of the extracellular domain.

It is found in the cytoplasm. Its subcellular location is the cytoskeleton. The protein localises to the cell membrane. The protein resides in the cell projection. It localises to the lamellipodium. It is found in the filopodium. Its subcellular location is the secreted. In terms of biological role, stimulates the proliferation of mast cells. Able to augment the proliferation of both myeloid and lymphoid hematopoietic progenitors in bone marrow culture. Also mediates cell-cell adhesion. Acts synergistically with other cytokines, probably interleukins. This chain is Kit ligand (KITLG), found in Capra hircus (Goat).